Here is a 120-residue protein sequence, read N- to C-terminus: Spermidine export protein MdtJ (120 aa).

Helical transmembrane passes span 1-21 (MFYW…TLSM), 31-51 (AGYI…SFAV), 54-74 (IALG…ITVF), and 81-101 (EVLS…IVLI).

This sequence belongs to the drug/metabolite transporter (DMT) superfamily. Small multidrug resistance (SMR) (TC 2.A.7.1) family. MdtJ subfamily. In terms of assembly, forms a complex with MdtI.

The protein localises to the cell inner membrane. In terms of biological role, catalyzes the excretion of spermidine. The protein is Spermidine export protein MdtJ of Salmonella arizonae (strain ATCC BAA-731 / CDC346-86 / RSK2980).